The following is a 346-amino-acid chain: Glycosyltransferase 1 domain-containing protein 1 (346 aa).

The signal sequence occupies residues Met1 to Ala16.

It belongs to the glycosyltransferase group 1 family. Glycosyltransferase 4 subfamily.

Its subcellular location is the secreted. The chain is Glycosyltransferase 1 domain-containing protein 1 (GLT1D1) from Homo sapiens (Human).